The following is a 147-amino-acid chain: Hemoglobin subunit gamma (147 aa).

The Globin domain occupies 3–147 (HFTEEDKATI…VASALSSRYH (145 aa)). Residues histidine 64 and histidine 93 each coordinate heme b.

The protein belongs to the globin family. In terms of assembly, heterotetramer of two alpha chains and two gamma chains in fetal hemoglobin (Hb F). Red blood cells.

In terms of biological role, gamma chains make up the fetal hemoglobin F, in combination with alpha chains. The sequence is that of Hemoglobin subunit gamma (HBG) from Macaca fuscata fuscata (Japanese macaque).